Consider the following 850-residue polypeptide: cAMP-inducible prespore protein D7 (850 aa).

The first 24 residues, 1 to 24 (MYSKKYTSFVIVLILSCIISTCTS), serve as a signal peptide directing secretion. Residues 119–130 (QNNNIGSSIGDS) are compositionally biased toward low complexity. 2 disordered regions span residues 119–167 (QNNN…SKTT) and 787–850 (DAEL…QNQK). The segment covering 131-143 (TGASTSPQFQSIN) has biased composition (polar residues). Residues 144-154 (GLSGASQSSGS) show a composition bias toward low complexity. Residues 787-798 (DAELAKNNKQEN) are compositionally biased toward basic and acidic residues. A compositionally biased stretch (polar residues) spans 801–820 (ENLVQEKQQSPDQIKNQLKN). Over residues 837–850 (EKNQQLLEQEQNQK) the composition is skewed to low complexity.

This chain is cAMP-inducible prespore protein D7 (D7), found in Dictyostelium discoideum (Social amoeba).